The following is a 470-amino-acid chain: Acetyl-CoA decarbonylase/synthase complex subunit beta 2 (470 aa).

The [Ni-Fe-S] cluster site is built by Cys190, Cys193, Cys279, and Cys281.

The protein belongs to the CdhC family. In terms of assembly, monomer. The ACDS complex is made up of alpha, epsilon, beta, gamma and delta chains with a probable stoichiometry of (alpha(2)epsilon(2))(4)-beta(8)-(gamma(1)delta(1))(8) (Potential). The cofactor is [Ni-Fe-S] cluster.

It carries out the reaction Co(I)-[corrinoid Fe-S protein] + acetyl-CoA + H(+) = methyl-Co(III)-[corrinoid Fe-S protein] + CO + CoA. Its pathway is one-carbon metabolism; methanogenesis from acetate. Part of a complex that catalyzes the reversible cleavage of acetyl-CoA, allowing growth on acetate as sole source of carbon and energy. The alpha-epsilon complex generates CO from CO(2), while the beta subunit (this protein) combines the CO with CoA and a methyl group to form acetyl-CoA. The methyl group, which is incorporated into acetyl-CoA, is transferred to the beta subunit by a corrinoid iron-sulfur protein (the gamma-delta complex). This Methanosarcina mazei (strain ATCC BAA-159 / DSM 3647 / Goe1 / Go1 / JCM 11833 / OCM 88) (Methanosarcina frisia) protein is Acetyl-CoA decarbonylase/synthase complex subunit beta 2 (cdhC2).